Reading from the N-terminus, the 754-residue chain is FAD-dependent monooxygenase ntnA (754 aa).

A helical membrane pass occupies residues 3-23 (IPFKVLIIGGGVAGLTLAIML). FAD-binding residues include Glu34, Gly48, and Arg109. Tyr218 is an active-site residue. FAD-binding residues include Asp311 and Ala324. A run of 4 helical transmembrane segments spans residues 446–466 (PLAT…PWLA), 486–506 (AEVL…MWVI), 536–556 (ILPI…YYYM), and 563–583 (LGVA…SAVC). An N-linked (GlcNAc...) asparagine glycan is attached at Asn586. A helical transmembrane segment spans residues 595–615 (SWWFTADFAFPVVAYLSGMFL). Residue Asn616 is glycosylated (N-linked (GlcNAc...) asparagine). The next 2 helical transmembrane spans lie at 644–664 (IAFV…TTIL) and 679–697 (LASL…AWEL). N-linked (GlcNAc...) asparagine glycosylation occurs at Asn701. Residues 712-732 (LTILSSTIFGGPAATLAGTFI) traverse the membrane as a helical segment.

Belongs to the paxM FAD-dependent monooxygenase family. FAD serves as cofactor.

Its subcellular location is the membrane. Its pathway is secondary metabolite biosynthesis; terpenoid biosynthesis. In terms of biological role, FAD-dependent monooxygenase; part of the gene cluster that mediates the biosynthesis of the meroterpenoids nectripenoids A and B, as well as cochliquninone D and isocochliquninone E. The pathway probably begins with the HR-PKS ntnH that catalyzes two chain-extension steps to form a reduced triketide, which then primes the SAT domain in the NR-PKS ntnG to initiate three more cycles of extension to give a linear hexaketide corresponding to the polyketide part of nectripenoids. The FAD-dependent monooxygenase ntnJ then performs an oxidative decarboxylation at C11 of the ntnH/ntnG product, via an electrophilic aromatic hydroxylation with concomitant ipso-decarboxylation. The membrane-bound polyprenyl transferase ntnF then introduces a farnesyl group before the FAD-dependent monooxygenase ntnK functions as the first epoxidase on terminal C12'-C13' olefin, followed by a second epoxidation on C7'-C8' catalyzed by ntnA. The terpene cyclase/mutase ntnI then initiates the sequential tricyclic ring formation through protonation of the terminal epoxide and catalyzes the regioselective and stereoselective 6/6/6-tricyclic ring formation. The cytochrome P450 monooxygenase ntnM may then hydroxylate C1'. This chain is FAD-dependent monooxygenase ntnA, found in Nectria sp.